A 432-amino-acid chain; its full sequence is Tol-Pal system protein TolB (432 aa).

Positions 1–21 are cleaved as a signal peptide; it reads MKHVRIFATLLALLVISVTPA.

It belongs to the TolB family. As to quaternary structure, the Tol-Pal system is composed of five core proteins: the inner membrane proteins TolA, TolQ and TolR, the periplasmic protein TolB and the outer membrane protein Pal. They form a network linking the inner and outer membranes and the peptidoglycan layer.

The protein resides in the periplasm. Its function is as follows. Part of the Tol-Pal system, which plays a role in outer membrane invagination during cell division and is important for maintaining outer membrane integrity. This is Tol-Pal system protein TolB from Geobacter sulfurreducens (strain ATCC 51573 / DSM 12127 / PCA).